Consider the following 73-residue polypeptide: Exodeoxyribonuclease 7 small subunit (73 aa).

It belongs to the XseB family. As to quaternary structure, heterooligomer composed of large and small subunits.

The protein resides in the cytoplasm. The catalysed reaction is Exonucleolytic cleavage in either 5'- to 3'- or 3'- to 5'-direction to yield nucleoside 5'-phosphates.. In terms of biological role, bidirectionally degrades single-stranded DNA into large acid-insoluble oligonucleotides, which are then degraded further into small acid-soluble oligonucleotides. In Streptococcus mutans serotype c (strain ATCC 700610 / UA159), this protein is Exodeoxyribonuclease 7 small subunit.